We begin with the raw amino-acid sequence, 357 residues long: DnaJ homolog subfamily C member 25 (357 aa).

A helical transmembrane segment spans residues 19-39 (WLLLAPLLLVPLLARPAEALV). The region spanning 48 to 121 (DCYEVLGVSR…ETRKDYDYML (74 aa)) is the J domain. 2 consecutive transmembrane segments (helical) span residues 147–167 (VVILVSVCAISMFQYFSWWNS) and 241–261 (LLLFQVILAPVHLCSYIAWYC).

The protein belongs to the DNAJC25 family.

It localises to the membrane. The polypeptide is DnaJ homolog subfamily C member 25 (Dnajc25) (Mus musculus (Mouse)).